Consider the following 289-residue polypeptide: MSLFNTENTWAFVFGLLGNLISFAVFLSPVPTFYRIWKKKTTEGFQSIPYVVALFSATLWLYYATQKKDVFLLVTINAFGCFIETIYISMFLAYAPKPARMLTVKMLLLMNFGGFCAILLLCQFLVKGATRAKIIGGICVGFSVCVFAAPLSIIRTVIKTRSVEYMPFSLSLTLTISAVIWLLYGLALKDIYVAFPNVLGFALGALQMILYVVYKYCKTSPHLGEKEVEAAKLPEVSLDMLKLGTVSSPEPISVVRQANKCTCGNDRRAEIEDGQTPKHGKQSSSAAAT.

Residues 1-9 lie on the Extracellular side of the membrane; the sequence is MSLFNTENT. A helical membrane pass occupies residues 10–30; that stretch reads WAFVFGLLGNLISFAVFLSPV. Residues 12-98 enclose the MtN3/slv 1 domain; sequence FVFGLLGNLI…SMFLAYAPKP (87 aa). At 31 to 43 the chain is on the cytoplasmic side; that stretch reads PTFYRIWKKKTTE. Residues 44–64 form a helical membrane-spanning segment; that stretch reads GFQSIPYVVALFSATLWLYYA. The Extracellular segment spans residues 65 to 70; it reads TQKKDV. A helical membrane pass occupies residues 71-91; that stretch reads FLLVTINAFGCFIETIYISMF. At 92–105 the chain is on the cytoplasmic side; it reads LAYAPKPARMLTVK. The chain crosses the membrane as a helical span at residues 106–126; it reads MLLLMNFGGFCAILLLCQFLV. Over 127 to 133 the chain is Extracellular; sequence KGATRAK. A helical transmembrane segment spans residues 134–154; the sequence is IIGGICVGFSVCVFAAPLSII. A MtN3/slv 2 domain is found at 134 to 218; the sequence is IIGGICVGFS…ILYVVYKYCK (85 aa). At 155 to 167 the chain is on the cytoplasmic side; the sequence is RTVIKTRSVEYMP. The chain crosses the membrane as a helical span at residues 168–188; sequence FSLSLTLTISAVIWLLYGLAL. Residues 189–192 lie on the Extracellular side of the membrane; that stretch reads KDIY. Residues 193-213 traverse the membrane as a helical segment; sequence VAFPNVLGFALGALQMILYVV. Over 214–289 the chain is Cytoplasmic; it reads YKYCKTSPHL…GKQSSSAAAT (76 aa). The disordered stretch occupies residues 266-289; it reads DRRAEIEDGQTPKHGKQSSSAAAT. A Phosphothreonine modification is found at threonine 276.

Belongs to the SWEET sugar transporter family. As to quaternary structure, forms homooligomers and heterooligomers with SWEET1, SWEET3, SWEET5, SWEET6, SWEET7, SWEET8, SWEET9, SWEET12, SWEET13, SWEET15 and SWEET17. In terms of tissue distribution, expressed in leaves, especially in phloem. Expressed in developing seeds.

The protein resides in the cell membrane. Functionally, mediates both low-affinity uptake and efflux of sugar across the plasma membrane. Involved in phloem loading by mediating export from parenchyma cells feeding H(+)-coupled import into the sieve element/companion cell complex, thus contributing to the sucrose migration from sites of synthesis in the mesophyll to the phloem. Contributes to seed filling by triggering sucrose efflux involved in the transfer of sugars from seed coat to embryos. The protein is Bidirectional sugar transporter SWEET11 of Arabidopsis thaliana (Mouse-ear cress).